The sequence spans 840 residues: Phosphatidylglycerol lysyltransferase (840 aa).

Residues 1-8 (MNQEVKNK) are Cytoplasmic-facing. A helical membrane pass occupies residues 9–29 (IFSILKITFATALFIFVVITL). The Extracellular segment spans residues 30–52 (YRELSGINFKDTLVEFSKINRMS). The chain crosses the membrane as a helical span at residues 53 to 73 (LVLLFIGGGASLVILSMYDVI). The Cytoplasmic portion of the chain corresponds to 74–89 (LSRALKMDISLGKVLR). Residues 90–110 (VSYIINALNAIVGFGGFIGAG) form a helical membrane-spanning segment. The Extracellular portion of the chain corresponds to 111–128 (VRAMVYKNYTHDKKKLVH). A helical transmembrane segment spans residues 129 to 149 (FISLILISMLTGLSLLSLLIV). Residues 150 to 161 (FHVFDASLILDK) are Cytoplasmic-facing. Residues 162–182 (ITWVRWVLYVVSFFLPLFIIY) form a helical membrane-spanning segment. The Extracellular portion of the chain corresponds to 183–200 (SMVRPPDKNNRFVGLYCT). Residues 201–221 (LVSCVEWLAAAVVLYFCGVIV) traverse the membrane as a helical segment. Residues 222-229 (DAHVSFMS) lie on the Cytoplasmic side of the membrane. Residues 230 to 250 (FIAIFIIAALSGLVSFIPGGF) form a helical membrane-spanning segment. Over 251–271 (GAFDLVVLLGFKTLGVPEEKV) the chain is Extracellular. The helical transmembrane segment at 272–292 (LLMLLLYRFAYYFVPVIIALI) threads the bilayer. Residues 293–337 (LSSFEFGTSAKKYIEGSKYFIPAKDVTSFLMSYQKDIIAKIPSLS) are Cytoplasmic-facing. A helical transmembrane segment spans residues 338–358 (LAILVFFTSMIFFVNNLTIVY). Topologically, residues 359–369 (DALYDGNHLTY) are extracellular. Residues 370 to 390 (YILLAIHTSACLLLLLNVVGI) traverse the membrane as a helical segment. Residues 391 to 394 (YKQS) lie on the Cytoplasmic side of the membrane. The next 2 helical transmembrane spans lie at 395-415 (RRAI…TFFT) and 416-436 (YASY…IVAF). Topologically, residues 437 to 450 (RRARRLKRPVRMRN) are cytoplasmic. The chain crosses the membrane as a helical span at residues 451 to 471 (IVAMLLFSLFILYVNHIFIAG). Topologically, residues 472-489 (TLYALDIYTIEMHTSVLR) are extracellular. The helical transmembrane segment at 490 to 510 (YYFWLTILIIAIIIGMIAWLF) threads the bilayer. Residues 511-840 (DYQFSKVRIS…SKVMRVIRHK (330 aa)) are Cytoplasmic-facing.

The protein belongs to the LPG synthase family.

It localises to the cell membrane. It catalyses the reaction L-lysyl-tRNA(Lys) + a 1,2-diacyl-sn-glycero-3-phospho-(1'-sn-glycerol) = a 1,2-diacyl-sn-glycero-3-phospho-1'-(3'-O-L-lysyl)-sn-glycerol + tRNA(Lys). In terms of biological role, catalyzes the transfer of a lysyl group from L-lysyl-tRNA(Lys) to membrane-bound phosphatidylglycerol (PG), which produces lysylphosphatidylglycerol (LPG), a major component of the bacterial membrane with a positive net charge. LPG synthesis contributes to bacterial virulence as it is involved in the resistance mechanism against cationic antimicrobial peptides (CAMP) produces by the host's immune system (defensins, cathelicidins) and by the competing microorganisms (bacteriocins). In fact, the modification of anionic phosphatidylglycerol with positively charged L-lysine results in repulsion of the peptides. The sequence is that of Phosphatidylglycerol lysyltransferase (mprF) from Staphylococcus aureus (strain MSSA476).